Reading from the N-terminus, the 149-residue chain is UPF0178 protein Mmwyl1_2258 (149 aa).

This sequence belongs to the UPF0178 family.

The protein is UPF0178 protein Mmwyl1_2258 of Marinomonas sp. (strain MWYL1).